The primary structure comprises 307 residues: Recombination-associated protein RdgC (307 aa).

The protein belongs to the RdgC family.

The protein resides in the cytoplasm. Its subcellular location is the nucleoid. Functionally, may be involved in recombination. This Colwellia psychrerythraea (strain 34H / ATCC BAA-681) (Vibrio psychroerythus) protein is Recombination-associated protein RdgC.